A 272-amino-acid chain; its full sequence is 1,4-dihydroxy-2-naphthoyl-CoA synthase (272 aa).

Residues R33, 72–76, Y84, 116–120, T142, S148, Y245, and K260 contribute to the substrate site; these read SGGDQ and YAIGG. 141-143 serves as a coordination point for hydrogencarbonate; that stretch reads QTG.

The protein belongs to the enoyl-CoA hydratase/isomerase family. MenB subfamily. The cofactor is hydrogencarbonate.

The catalysed reaction is 2-succinylbenzoyl-CoA + H(+) = 1,4-dihydroxy-2-naphthoyl-CoA + H2O. It participates in quinol/quinone metabolism; 1,4-dihydroxy-2-naphthoate biosynthesis; 1,4-dihydroxy-2-naphthoate from chorismate: step 6/7. The protein operates within quinol/quinone metabolism; menaquinone biosynthesis. Functionally, converts o-succinylbenzoyl-CoA (OSB-CoA) to 1,4-dihydroxy-2-naphthoyl-CoA (DHNA-CoA). The protein is 1,4-dihydroxy-2-naphthoyl-CoA synthase of Staphylococcus epidermidis (strain ATCC 35984 / DSM 28319 / BCRC 17069 / CCUG 31568 / BM 3577 / RP62A).